We begin with the raw amino-acid sequence, 150 residues long: Endoribonuclease YbeY (150 aa).

Zn(2+) contacts are provided by histidine 115, histidine 119, and histidine 125.

This sequence belongs to the endoribonuclease YbeY family. Zn(2+) serves as cofactor.

It is found in the cytoplasm. Single strand-specific metallo-endoribonuclease involved in late-stage 70S ribosome quality control and in maturation of the 3' terminus of the 16S rRNA. The sequence is that of Endoribonuclease YbeY from Aquifex aeolicus (strain VF5).